The primary structure comprises 192 residues: Casparian strip membrane protein 1 (192 aa).

At 1–26 (MTKSVRLEEGDASKVLVPVGSNKGVS) the chain is on the cytoplasmic side. Residues 27–47 (VMDLVLRLVGIAGTLGAAIAM) traverse the membrane as a helical segment. Topologically, residues 48-75 (GTNEQTLPFFTRFVVFNAEYDDFRSFRL) are extracellular. A helical membrane pass occupies residues 76–96 (FVIVNAIVCAYFVLTLPLSIV). The Cytoplasmic portion of the chain corresponds to 97 to 107 (HIMRSAARGSR). The chain crosses the membrane as a helical span at residues 108–128 (ILLIIMDTVMLALLTAGASAA). The Extracellular segment spans residues 129-161 (ASIVYLAHNGNTSTNWLPVCQQYGDFCQGASGS). An N-linked (GlcNAc...) asparagine glycan is attached at Asn-139. Residues 162–182 (LIGSFGAVVVFILIILLGAIA) form a helical membrane-spanning segment. The Cytoplasmic portion of the chain corresponds to 183 to 192 (LSRHAKRVVL).

Belongs to the Casparian strip membrane proteins (CASP) family. Homodimer and heterodimers.

The protein localises to the cell membrane. Its function is as follows. Regulates membrane-cell wall junctions and localized cell wall deposition. Required for establishment of the Casparian strip membrane domain (CSD) and the subsequent formation of Casparian strips, a cell wall modification of the root endodermis that determines an apoplastic barrier between the intraorganismal apoplasm and the extraorganismal apoplasm and prevents lateral diffusion. The polypeptide is Casparian strip membrane protein 1 (Lactuca saligna (Willowleaf lettuce)).